The sequence spans 553 residues: Formate--tetrahydrofolate ligase (553 aa).

Position 63–70 (63–70 (TPAGEGKS)) interacts with ATP.

Belongs to the formate--tetrahydrofolate ligase family.

The catalysed reaction is (6S)-5,6,7,8-tetrahydrofolate + formate + ATP = (6R)-10-formyltetrahydrofolate + ADP + phosphate. It participates in one-carbon metabolism; tetrahydrofolate interconversion. This is Formate--tetrahydrofolate ligase from Limosilactobacillus fermentum (strain NBRC 3956 / LMG 18251) (Lactobacillus fermentum).